The following is a 420-amino-acid chain: COP9 signalosome complex subunit 11 (420 aa).

In terms of domain architecture, PCI spans 177–346 (SIHEHPSLVD…VYYKEDLPVG (170 aa)). The tract at residues 386–420 (VEPLNRSQDMDAFELHEQSEDEEYEEEHLEEGENV) is disordered. The span at 404–420 (SEDEEYEEEHLEEGENV) shows a compositional bias: acidic residues.

As to quaternary structure, component of a COP9 signalosome-like (CSN) complex.

Its subcellular location is the cytoplasm. The protein localises to the nucleus. Functionally, component of the COP9 signalosome (CSN) complex that acts as an regulator of the ubiquitin (Ubl) conjugation pathway by mediating the deneddylation of the cullin subunit of SCF-type E3 ubiquitin-protein ligase complexes The CSN complex is involved in the regulation of the mating pheromone response. PCI8 may also be involved in transcriptional and translational control. In Eremothecium gossypii (strain ATCC 10895 / CBS 109.51 / FGSC 9923 / NRRL Y-1056) (Yeast), this protein is COP9 signalosome complex subunit 11 (PCI8).